The sequence spans 1470 residues: Calmodulin-regulated spectrin-associated protein 2 (1470 aa).

A Calponin-homology (CH) domain is found at 222–335 (WKLVPARYRK…FMAELFWWFE (114 aa)). The disordered stretch occupies residues 374–397 (SSSSSDFTSRYTRPQTHSSVSGGI). Polar residues predominate over residues 380 to 390 (FTSRYTRPQTH). Phosphoserine occurs at positions 402 and 404. Residue T412 is modified to Phosphothreonine. A phosphoserine mark is found at S450, S581, S582, S594, and S656. Disordered regions lie at residues 580–622 (QSSP…EDSS) and 648–712 (ASNP…EGSE). T661 is subject to Phosphothreonine. S663 bears the Phosphoserine mark. Low complexity predominate over residues 663–682 (STKSQPGSSASSSSGVKMTS). Positions 686–696 (QKFRKLNHTDG) are enriched in basic and acidic residues. The stretch at 739–776 (LLASEMVHLRMRLEEKRRAIEAQKKKMEAAFTKQRQKM) forms a coiled coil. Basic and acidic residues predominate over residues 796–835 (REEAAGAEDEKVYTDRAKEKESQKMDGQRSKSLADIKESM). Residues 796–864 (REEAAGAEDE…QWNLTSPSEE (69 aa)) are disordered. S845 bears the Phosphoserine mark. A coiled-coil region spans residues 870-909 (ELLEYTKSIEKLNSSLHFLQQEMQRLSLQQEMLMQMREQQ). Positions 905–1016 (MREQQSWVIS…IQTRSFVCFG (112 aa)) are MBD region. Phosphoserine occurs at positions 914 and 919. Disordered regions lie at residues 930-1059 (RQAG…PLES) and 1078-1099 (NEDQ…PTAP). The span at 935–946 (SSAAAPFSADSP) shows a compositional bias: low complexity. The segment covering 952 to 971 (SPQSSTRKSASFSVKNQRTP) has biased composition (polar residues). Phosphothreonine occurs at positions 979, 984, and 986. Phosphoserine occurs at positions 990 and 1001. The segment covering 1001–1011 (SPSQVPIQTRS) has biased composition (polar residues). 2 stretches are compositionally biased toward basic and acidic residues: residues 1020-1037 (EPQK…EPSE) and 1044-1056 (SCDH…EVKP). The segment covering 1086-1098 (TDPPPKPVFPPTA) has biased composition (pro residues). At S1129 the chain carries Phosphoserine. Residues 1147 to 1219 (KDDQKAENDM…REFIRQEYMR (73 aa)) adopt a coiled-coil conformation. Residues 1167-1233 (RLRREKETQL…KLMEDMDTVI (67 aa)) show a composition bias toward basic and acidic residues. Positions 1167 to 1327 (RLRREKETQL…TTSSVASGTE (161 aa)) are disordered. Over residues 1268 to 1280 (SSLSLASLNTGDT) the composition is skewed to polar residues. 3 positions are modified to phosphoserine: S1294, S1300, and S1302. The span at 1315–1327 (NASTTSSVASGTE) shows a compositional bias: polar residues. Residues 1330–1464 (GPKLYKEPSA…QTKRPVTPKK (135 aa)) form the CKK domain.

Belongs to the CAMSAP1 family. Interacts with CAMSAP3. Interacts with KATNA1 and KATNB1; leading to regulate the length of CAMSAP2-decorated microtubule stretches. Interacts with a complex formed by AKAP9 and PDE4DIP; this interaction, which is PDE4DIP isoform-specific, recruits CAMSAP2 to the Golgi. Interacts with MAPRE1/EB1. In terms of tissue distribution, present in the soma, axon, and dendritic shaft of hippocampal neurons (at protein level).

It localises to the cytoplasm. The protein resides in the cytoskeleton. Its subcellular location is the golgi apparatus. The protein localises to the cilium basal body. Key microtubule-organizing protein that specifically binds the minus-end of non-centrosomal microtubules and regulates their dynamics and organization. Specifically recognizes growing microtubule minus-ends and autonomously decorates and stabilizes microtubule lattice formed by microtubule minus-end polymerization. Acts on free microtubule minus-ends that are not capped by microtubule-nucleating proteins or other factors and protects microtubule minus-ends from depolymerization. In addition, it also reduces the velocity of microtubule polymerization. Through the microtubule cytoskeleton, also regulates the organization of cellular organelles including the Golgi and the early endosomes. Essential for the tethering, but not for nucleation of non-centrosomal microtubules at the Golgi: together with Golgi-associated proteins AKAP9 and PDE4DIP, required to tether non-centrosomal minus-end microtubules to the Golgi, an important step for polarized cell movement. Also acts as a regulator of neuronal polarity and development: localizes to non-centrosomal microtubule minus-ends in neurons and stabilizes non-centrosomal microtubules, which is required for neuronal polarity, axon specification and dendritic branch formation. Through the microtubule cytoskeleton, regulates the autophagosome transport. This is Calmodulin-regulated spectrin-associated protein 2 from Rattus norvegicus (Rat).